Consider the following 338-residue polypeptide: Phosphatidate cytidylyltransferase, mitochondrial (338 aa).

It belongs to the TAM41 family. Mg(2+) is required as a cofactor.

The protein resides in the mitochondrion inner membrane. It carries out the reaction a 1,2-diacyl-sn-glycero-3-phosphate + CTP + H(+) = a CDP-1,2-diacyl-sn-glycerol + diphosphate. It functions in the pathway phospholipid metabolism; CDP-diacylglycerol biosynthesis; CDP-diacylglycerol from sn-glycerol 3-phosphate: step 3/3. Catalyzes the conversion of phosphatidic acid (PA) to CDP-diacylglycerol (CDP-DAG), an essential intermediate in the synthesis of phosphatidylglycerol, cardiolipin and phosphatidylinositol. In Danio rerio (Zebrafish), this protein is Phosphatidate cytidylyltransferase, mitochondrial (tamm41).